The following is a 98-amino-acid chain: uncharacterized protein (98 aa).

This is an uncharacterized protein from Methanocaldococcus jannaschii (strain ATCC 43067 / DSM 2661 / JAL-1 / JCM 10045 / NBRC 100440) (Methanococcus jannaschii).